The following is an 834-amino-acid chain: DNA-directed RNA polymerase subunit beta' (834 aa).

The Zn(2+) site is built by Cys-88, Cys-90, Cys-104, and Cys-107. Residues Asp-641, Asp-643, and Asp-645 each coordinate Mg(2+).

It belongs to the RNA polymerase beta' chain family. RpoC1 subfamily. As to quaternary structure, in plastids the minimal PEP RNA polymerase catalytic core is composed of four subunits: alpha, beta, beta', and beta''. When a (nuclear-encoded) sigma factor is associated with the core the holoenzyme is formed, which can initiate transcription. The cofactor is Mg(2+). Zn(2+) serves as cofactor.

The protein localises to the plastid. The catalysed reaction is RNA(n) + a ribonucleoside 5'-triphosphate = RNA(n+1) + diphosphate. Functionally, DNA-dependent RNA polymerase catalyzes the transcription of DNA into RNA using the four ribonucleoside triphosphates as substrates. This Helicosporidium sp. subsp. Simulium jonesii (Green alga) protein is DNA-directed RNA polymerase subunit beta' (rpoC1).